Reading from the N-terminus, the 269-residue chain is Ribosomal RNA small subunit methyltransferase A (269 aa).

His12, Leu14, Gly39, Glu60, Asp81, and Asn103 together coordinate S-adenosyl-L-methionine.

It belongs to the class I-like SAM-binding methyltransferase superfamily. rRNA adenine N(6)-methyltransferase family. RsmA subfamily.

It localises to the cytoplasm. The enzyme catalyses adenosine(1518)/adenosine(1519) in 16S rRNA + 4 S-adenosyl-L-methionine = N(6)-dimethyladenosine(1518)/N(6)-dimethyladenosine(1519) in 16S rRNA + 4 S-adenosyl-L-homocysteine + 4 H(+). In terms of biological role, specifically dimethylates two adjacent adenosines (A1518 and A1519) in the loop of a conserved hairpin near the 3'-end of 16S rRNA in the 30S particle. May play a critical role in biogenesis of 30S subunits. The sequence is that of Ribosomal RNA small subunit methyltransferase A from Leptothrix cholodnii (strain ATCC 51168 / LMG 8142 / SP-6) (Leptothrix discophora (strain SP-6)).